Here is a 504-residue protein sequence, read N- to C-terminus: MTTFTKLSDQDTPSIAIHPSRRISKINPNIYAGFTEHMGRCIYGGIYDPGNPLSDENGFRKDVLEALKTLDIPVVRYPGGNFMATYHWIDGVGPKDQRPARPELAWLGTETNQFGTDEFLKWCEVLGTEPYFCLNFGTGTLDEALAWVEYCNGTGNTYYANLRRKNGREEPYNVKYWALGNETWGPWQVEQMTKEAYSHKAYQWAKALKLLDPSLVLILCGQDGTASWDYYTLKHCLLPVNSPLSTSAVPLIDMHSIHLYTSSSSHLPNATAPLAAERAIEITSSLIDLARIENGVPPEQARPTICFDEWNVWDPIRAEGSKGAEECYTLSDALAVAVWLNVFVRKSKDLGMACIAQTVNVISPLMTTKEGITKQTTWWPLYLFSKYMRGWTISAHLASATYEGETSPKWIRGVKETPWLDVSAVLGEDGYVNVAVVNIHEEKAIETTIDGASGEVTVFTVTGDSVAATNMKGKEEVAVVESTWDGQGPYAFPKHSLTLLRWKA.

3 N-linked (GlcNAc...) asparagine glycosylation sites follow: asparagine 152, asparagine 181, and asparagine 269.

This sequence belongs to the glycosyl hydrolase 51 family.

It is found in the secreted. It catalyses the reaction Hydrolysis of terminal non-reducing alpha-L-arabinofuranoside residues in alpha-L-arabinosides.. The protein operates within glycan metabolism; L-arabinan degradation. Alpha-L-arabinofuranosidase involved in the degradation of arabinoxylan, a major component of plant hemicellulose. Acts only on small linear 1,5-alpha-linked L-arabinofuranosyl oligosaccharides. In Aspergillus flavus (strain ATCC 200026 / FGSC A1120 / IAM 13836 / NRRL 3357 / JCM 12722 / SRRC 167), this protein is Probable alpha-L-arabinofuranosidase C (abfC).